The following is a 148-amino-acid chain: UPF0260 protein mll2411 (148 aa).

This sequence belongs to the UPF0260 family.

This is UPF0260 protein mll2411 from Mesorhizobium japonicum (strain LMG 29417 / CECT 9101 / MAFF 303099) (Mesorhizobium loti (strain MAFF 303099)).